Here is a 231-residue protein sequence, read N- to C-terminus: Eukaryotic translation initiation factor 4E allele Eva1 (231 aa).

Over residues 1-20 (MAAAEMERTTSFDAAEKLKA) the composition is skewed to basic and acidic residues. Residues 1–34 (MAAAEMERTTSFDAAEKLKAADAGGGEVDDELEE) are disordered. EIF4G-binding stretches follow at residues 56 to 59 (HPLE) and 66 to 102 (FDNP…NNIH). Residues 74–79 (RQIDWG), K106, and 124–125 (WE) each bind mRNA. Residues C129 and C167 are joined by a disulfide bond. The EIF4G-binding stretch occupies residues 150-159 (YTLLAMIGHQ). MRNA contacts are provided by residues 174 to 179 (RVKGEK) and 219 to 223 (KRLDR).

It belongs to the eukaryotic initiation factor 4E family. As to quaternary structure, EIF4F is a multi-subunit complex, the composition of which varies with external and internal environmental conditions. It is composed of at least EIF4A, EIF4E and EIF4G. EIF4E is also known to interact with other partners. In higher plants two isoforms of EIF4F have been identified, named isoform EIF4F and isoform EIF(iso)4F. Isoform EIF4F has subunits p220 and p26, whereas isoform EIF(iso)4F has subunits p82 and p28. (Microbial infection) Interacts with potyvirus viral genome-linked protein (VPg); this interaction is possible in susceptible hosts but impaired in resistant plants. Post-translationally, according to the redox status, the Cys-129-Cys-167 disulfide bridge may have a role in regulating protein function by affecting its ability to bind capped mRNA.

The protein resides in the nucleus. It localises to the cytoplasm. Component of the protein complex eIF4F, which is involved in the recognition of the mRNA cap, ATP-dependent unwinding of 5'-terminal secondary structure and recruitment of mRNA to the ribosome. Recognizes and binds the 7-methylguanosine-containing mRNA cap during an early step in the initiation of protein synthesis and facilitates ribosome binding by inducing the unwinding of the mRNAs secondary structures. Key component of recessive resistance to potyviruses. Its function is as follows. (Microbial infection) Susceptibility host factor required for viral infection (e.g. Potato virus Y (PVY)) by recruiting viral RNAs to the host ribosomal complex via an interaction with viral genome-linked protein (VPg). Displayed sequence is the allele Eva1 that confers resistance to potato virus Y (PVY) by failing to interact with the viral VPg protein. The chain is Eukaryotic translation initiation factor 4E allele Eva1 from Solanum etuberosum (Wild potato).